Consider the following 394-residue polypeptide: Elongation factor Tu (394 aa).

The tr-type G domain maps to 10–204; that stretch reads KPHINIGTIG…AVDDNIPTPE (195 aa). A G1 region spans residues 19–26; the sequence is GHVDHGKT. 19-26 provides a ligand contact to GTP; sequence GHVDHGKT. Thr-26 is a binding site for Mg(2+). A G2 region spans residues 60 to 64; sequence GITIN. The segment at 81 to 84 is G3; the sequence is DCPG. Residues 81 to 85 and 136 to 139 contribute to the GTP site; these read DCPGH and NKID. A G4 region spans residues 136 to 139; sequence NKID. The G5 stretch occupies residues 174–176; it reads SAL.

It belongs to the TRAFAC class translation factor GTPase superfamily. Classic translation factor GTPase family. EF-Tu/EF-1A subfamily. As to quaternary structure, monomer.

It is found in the cytoplasm. The catalysed reaction is GTP + H2O = GDP + phosphate + H(+). GTP hydrolase that promotes the GTP-dependent binding of aminoacyl-tRNA to the A-site of ribosomes during protein biosynthesis. The chain is Elongation factor Tu from Chlamydia abortus (strain DSM 27085 / S26/3) (Chlamydophila abortus).